A 514-amino-acid chain; its full sequence is Periplasmic [NiFeSe] hydrogenase large subunit (514 aa).

Glutamate 52 lines the Fe cation pocket. Residues cysteine 71 and cysteine 74 each coordinate Ni(2+). Residues cysteine 74 and isoleucine 445 each contribute to the Fe cation site. Ni(2+) contacts are provided by selenocysteine 493 and cysteine 496. A non-standard amino acid (selenocysteine) is located at residue selenocysteine 493. Fe cation is bound by residues cysteine 496 and histidine 499.

This sequence belongs to the [NiFe]/[NiFeSe] hydrogenase large subunit family. As to quaternary structure, heterodimer of a large and a small subunit. Fe cation serves as cofactor. It depends on Ni(2+) as a cofactor.

The protein localises to the periplasm. It catalyses the reaction H2 + A = AH2. This Desulfomicrobium baculatum (Desulfovibrio baculatus) protein is Periplasmic [NiFeSe] hydrogenase large subunit.